The primary structure comprises 814 residues: Syn-copalyl diphosphate synthase TPS3, chloroplastic (814 aa).

The transit peptide at Met-1–Arg-52 directs the protein to the chloroplast. Lys-248 provides a ligand contact to substrate. Mg(2+)-binding residues include Asp-386 and Asp-388. The DXDD motif motif lies at Asp-386 to Asp-389. Lys-472 provides a ligand contact to substrate.

The protein belongs to the terpene synthase family. Mg(2+) serves as cofactor. In terms of tissue distribution, mostly expressed in trichomes of leaves and fruits.

The protein resides in the plastid. It is found in the chloroplast. It catalyses the reaction (2E,6E,10E)-geranylgeranyl diphosphate = 9alpha-copalyl diphosphate. It functions in the pathway secondary metabolite biosynthesis; terpenoid biosynthesis. Involved in the biosynthesis of labdane-type diterpenoid including cleroda-dienols, and peregrinol lactones and furan derivatives, dopaminergic diterpenoids that can bind to dopamine receptors in the human pituitary gland, have probably ability to lower prolactin levels, and are used to treat menstrual cycle disorders (e.g. premenstrual syndrome and mastodynia). Terpene synthase that produces syn-copalyl diphosophate from geranylgeranyl diphosphate (GGPP). The sequence is that of Syn-copalyl diphosphate synthase TPS3, chloroplastic from Vitex agnus-castus (Chaste tree).